Here is a 1548-residue protein sequence, read N- to C-terminus: Multidrug resistance protein (1548 aa).

The Cytoplasmic portion of the chain corresponds to 1 to 238 (MVDNGHVTIA…YHVWAQILPK (238 aa)). The ABC transmembrane type-1 1 domain maps to 231–514 (VWAQILPKLL…IPIIISSILQ (284 aa)). The chain crosses the membrane as a helical span at residues 239–256 (LLSDVTALMLPVLLEYFV). Residue asparagine 263 is glycosylated (N-linked (GlcNAc...) asparagine). 5 helical membrane passes run 266-287 (WGWGLGLALTIFLTNVIQSCSA), 349-367 (VMYFWSAPLQLVLCLLLLI), 375-392 (VPGMAVLFVTLPLQAVIS), 463-480 (ATPTLVIAVVFILYHVSG), and 500-519 (VSFFMIPIIISSILQCFVSA). Residues 520–932 (KRVTAFIECP…PWSTYVAYLK (413 aa)) are Cytoplasmic-facing. The ABC transporter 1 domain maps to 634-855 (VEEGDREYYQ…ALEETLRGEL (222 aa)). Residue 667-674 (GSTGSGKS) coordinates ATP. 4 helical membrane passes run 933–950 (SCGGLEAWGCLLATFALT), 975–993 (TYLYVYLFIVFLEIFGSPL), 1051–1070 (GYLYLLEYFFSMCSTVIIMV), and 1072–1088 (VQPFVLVAIVPCVYSYY). The ABC transmembrane type-1 2 domain maps to 940 to 1221 (WGCLLATFAL…LVRQVAMVEA (282 aa)). Asparagine 1095 and asparagine 1154 each carry an N-linked (GlcNAc...) asparagine glycan. 2 consecutive transmembrane segments (helical) span residues 1164-1182 (LEFLSCVVTFMVAFIGVIG) and 1186-1205 (GASSQNIGLISLSLTMSMTL). Topologically, residues 1206-1548 (TETLNWLVRQ…RIVQPAVLSD (343 aa)) are cytoplasmic. The 236-residue stretch at 1286–1521 (LVLEGVQMRY…HQSMFHSMVE (236 aa)) folds into the ABC transporter 2 domain. 1320-1327 (GRTGSGKS) is a binding site for ATP.

Belongs to the ABC transporter superfamily. ABCB family. Multidrug resistance exporter (TC 3.A.1.201) subfamily.

It is found in the membrane. It carries out the reaction ATP + H2O + xenobioticSide 1 = ADP + phosphate + xenobioticSide 2.. The polypeptide is Multidrug resistance protein (PGPA) (Leishmania tarentolae (Sauroleishmania tarentolae)).